The chain runs to 1843 residues: Cilia- and flagella-associated protein 44 (1843 aa).

The tract at residues 1-86 is disordered; that stretch reads MKEPDDQDTS…PPVEVKEEPE (86 aa). Residues 29–39 are compositionally biased toward polar residues; it reads LKSSQDTTADS. Residues 41–58 show a composition bias toward acidic residues; the sequence is TDGEESYLGDDLDLDDMD. WD repeat units lie at residues 214–255, 258–297, 308–346, 353–390, 456–495, 497–541, and 561–600; these read GAEK…PILR, AFSQ…TGLK, TSTS…VELC, CHSG…TADV, FHSG…PLVH, KFKQ…GLTV, and PHTD…KPIG. The interval 701 to 726 is disordered; it reads REAFGEEEIPEEETSEEGEEEEPPLP. Residues 705–724 are compositionally biased toward acidic residues; the sequence is GEEEIPEEETSEEGEEEEPP. 2 WD repeats span residues 790-829 and 842-881; these read TEDN…PFLV and NNYG…IVPK. Disordered regions lie at residues 1040-1086, 1266-1291, and 1488-1524; these read YSKL…SVLE, QRKQ…SAGG, and KEVE…DDVF. Basic and acidic residues predominate over residues 1047 to 1071; sequence SQSERRQSKMERLEKEGPGKKESQR. Phosphoserine is present on Ser1069. Over residues 1072–1081 the composition is skewed to polar residues; sequence DTGGSISLQE. The span at 1492-1524 shows a compositional bias: acidic residues; sequence GDADEDEESEESSEEESSLESDEDASGSEDDVF. Coiled-coil stretches lie at residues 1548–1603 and 1631–1665; these read RLDI…RLNE and LVFS…CRER. One copy of the WD 10 repeat lies at 1699–1744; sequence IDLEALQTLSVNTTLEELKIKKLRKELSNAKELRMWEEKIAQVRWD.

The protein belongs to the CFAP44 family. As to expression, expressed in testis.

It is found in the cell projection. It localises to the cilium. Its subcellular location is the flagellum. The protein resides in the cytoplasm. The protein localises to the cytoskeleton. It is found in the flagellum axoneme. Functionally, flagellar protein involved in sperm flagellum axoneme organization and function. This chain is Cilia- and flagella-associated protein 44, found in Mus musculus (Mouse).